Reading from the N-terminus, the 175-residue chain is Thioredoxin-like protein CITRX, chloroplastic (175 aa).

The transit peptide at Met1–Ser73 directs the protein to the chloroplast. In terms of domain architecture, Thioredoxin spans Ala74–Leu175. Active-site nucleophile residues include Cys98 and Cys101. An intrachain disulfide couples Cys98 to Cys101.

It belongs to the thioredoxin family. Plant CITRX-type subfamily.

It is found in the plastid. The protein resides in the chloroplast. In terms of biological role, probable thiol-disulfide oxidoreductase that may play a role in proper chloroplast development. The chain is Thioredoxin-like protein CITRX, chloroplastic from Solanum tuberosum (Potato).